A 341-amino-acid chain; its full sequence is Holliday junction branch migration complex subunit RuvB (341 aa).

The interval 1–182 is large ATPase domain (RuvB-L); sequence MTERFVTPDF…FGVICRLEFY (182 aa). ATP contacts are provided by residues L21, R22, G63, K66, T67, T68, 129–131, R172, Y182, and R219; that span reads EDY. T67 serves as a coordination point for Mg(2+). The segment at 183 to 253 is small ATPAse domain (RuvB-S); sequence TDDELATIAG…IADMALSRLE (71 aa). Positions 256–341 are head domain (RuvB-H); the sequence is NCGLDHMDRL…RGKTSGELFS (86 aa). Residues R311 and R316 each coordinate DNA.

This sequence belongs to the RuvB family. As to quaternary structure, homohexamer. Forms an RuvA(8)-RuvB(12)-Holliday junction (HJ) complex. HJ DNA is sandwiched between 2 RuvA tetramers; dsDNA enters through RuvA and exits via RuvB. An RuvB hexamer assembles on each DNA strand where it exits the tetramer. Each RuvB hexamer is contacted by two RuvA subunits (via domain III) on 2 adjacent RuvB subunits; this complex drives branch migration. In the full resolvosome a probable DNA-RuvA(4)-RuvB(12)-RuvC(2) complex forms which resolves the HJ.

Its subcellular location is the cytoplasm. The enzyme catalyses ATP + H2O = ADP + phosphate + H(+). Functionally, the RuvA-RuvB-RuvC complex processes Holliday junction (HJ) DNA during genetic recombination and DNA repair, while the RuvA-RuvB complex plays an important role in the rescue of blocked DNA replication forks via replication fork reversal (RFR). RuvA specifically binds to HJ cruciform DNA, conferring on it an open structure. The RuvB hexamer acts as an ATP-dependent pump, pulling dsDNA into and through the RuvAB complex. RuvB forms 2 homohexamers on either side of HJ DNA bound by 1 or 2 RuvA tetramers; 4 subunits per hexamer contact DNA at a time. Coordinated motions by a converter formed by DNA-disengaged RuvB subunits stimulates ATP hydrolysis and nucleotide exchange. Immobilization of the converter enables RuvB to convert the ATP-contained energy into a lever motion, pulling 2 nucleotides of DNA out of the RuvA tetramer per ATP hydrolyzed, thus driving DNA branch migration. The RuvB motors rotate together with the DNA substrate, which together with the progressing nucleotide cycle form the mechanistic basis for DNA recombination by continuous HJ branch migration. Branch migration allows RuvC to scan DNA until it finds its consensus sequence, where it cleaves and resolves cruciform DNA. This is Holliday junction branch migration complex subunit RuvB from Syntrophotalea carbinolica (strain DSM 2380 / NBRC 103641 / GraBd1) (Pelobacter carbinolicus).